The following is a 209-amino-acid chain: Glutathione S-transferase 1, isoform C (209 aa).

A GST N-terminal domain is found at 1 to 80; the sequence is MDFYYLPGSA…YLAEKYGKDD (80 aa). Glutathione is bound by residues S9, 50–52, and 64–66; these read HCI and ESR. The GST C-terminal domain maps to 86-207; it reads DPQKRAVVNQ…AGIEEFKKYF (122 aa).

It belongs to the GST superfamily. Theta family. As to quaternary structure, homodimer.

The enzyme catalyses RX + glutathione = an S-substituted glutathione + a halide anion + H(+). It carries out the reaction 1,1,1-trichloro-2,2-bis(4-chlorophenyl)ethane = 1,1-dichloro-2,2-bis(4-chlorophenyl)ethylene + chloride + H(+). Conjugation of reduced glutathione to a wide number of exogenous and endogenous hydrophobic electrophiles. Has DDT dehydrochlorinase activity. The protein is Glutathione S-transferase 1, isoform C (GstD1) of Anopheles gambiae (African malaria mosquito).